Reading from the N-terminus, the 150-residue chain is 3-hydroxyacyl-[acyl-carrier-protein] dehydratase FabZ (150 aa).

His47 is a catalytic residue.

This sequence belongs to the thioester dehydratase family. FabZ subfamily.

The protein resides in the cytoplasm. It catalyses the reaction a (3R)-hydroxyacyl-[ACP] = a (2E)-enoyl-[ACP] + H2O. Involved in unsaturated fatty acids biosynthesis. Catalyzes the dehydration of short chain beta-hydroxyacyl-ACPs and long chain saturated and unsaturated beta-hydroxyacyl-ACPs. The protein is 3-hydroxyacyl-[acyl-carrier-protein] dehydratase FabZ of Verminephrobacter eiseniae (strain EF01-2).